The chain runs to 711 residues: RB-associated KRAB zinc finger protein (711 aa).

Residues 8–79 (LSFKDVAVAF…EGDRHAQRHL (72 aa)) enclose the KRAB domain. Glycyl lysine isopeptide (Lys-Gly) (interchain with G-Cter in SUMO2) cross-links involve residues Lys-97 and Lys-256. The tract at residues 170–257 (AYGESLEDFN…YPRSQMELKP (88 aa)) is required for interaction with RB1. 2 C2H2-type zinc fingers span residues 258–280 (FECT…QRAH) and 286–308 (YACS…RRSH). Residue Lys-312 forms a Glycyl lysine isopeptide (Lys-Gly) (interchain with G-Cter in SUMO2) linkage. 6 C2H2-type zinc fingers span residues 314–336 (YKCN…QRTH), 342–364 (YECS…QRNH), 370–392 (YPCN…QRTH), 398–420 (YKCN…QRTH), 426–448 (YQCS…YRSH), and 454–476 (YECT…WKVH). Residue Lys-354 forms a Glycyl lysine isopeptide (Lys-Gly) (interchain with G-Cter in SUMO2) linkage. Positions 414 to 711 (ITHQRTHTGE…TVNVLTVEKL (298 aa)) are interaction with AR. The C2H2-type 9; degenerate zinc-finger motif lies at 508–530 (YECNECGKTFLDSSAFHRHQSVP). A Glycyl lysine isopeptide (Lys-Gly) (interchain with G-Cter in SUMO2) cross-link involves residue Lys-534. 6 consecutive C2H2-type zinc fingers follow at residues 536-558 (YECN…YRGH), 564-586 (FGCS…QRVH), 592-614 (YECY…HRIH), 620-642 (YECS…YRSH), 648-670 (YECN…YRTH), and 676-698 (YECN…QRIH).

The protein belongs to the krueppel C2H2-type zinc-finger protein family. As to quaternary structure, interacts with AR. May also interact with other nuclear hormone receptors such as NR3C1/GR. Interacts with RB1.

Its subcellular location is the nucleus. In terms of biological role, may repress E2F-dependent transcription. May promote AR-dependent transcription. This is RB-associated KRAB zinc finger protein (Rbak) from Mus musculus (Mouse).